A 425-amino-acid polypeptide reads, in one-letter code: uncharacterized protein (425 aa).

To K.pneumoniae SorE.

This is an uncharacterized protein from Escherichia coli (strain K12).